Consider the following 350-residue polypeptide: Phosphotriesterase-related protein (350 aa).

A divalent metal cation-binding residues include His22, His24, Glu169, His201, His230, and Asp298.

Belongs to the metallo-dependent hydrolases superfamily. Phosphotriesterase family. Requires a divalent metal cation as cofactor.

This chain is Phosphotriesterase-related protein, found in Drosophila melanogaster (Fruit fly).